A 398-amino-acid polypeptide reads, in one-letter code: MALALVLNSGSSSIKFQLVNPANHATDDPFVSGLVEQIGEKMGRIILKIEGEKVVKEAPIADHSAGLSMSFDLMTEHGCGPSQVDIIAVGHRVVHGGILFSAPELITDEIVEMIRDLIPLAPLHNPANIDGIEVARRILPDVPHVAVFDTGFFHSLPPAAALYAINKDVAAEYGIRRYGFHGTSHEYVSSRVVDLMDKPAEEINTITFHLGNGASMAAVKGGVAVDTSMGMTPLAGLVMGTRTGDIDPGVVFHLARNANMSIDEIDNLMNKKSGVKGLSGVNDFRELHQMIEDGDQDAWSAYNIYIHQLRRYLGSYMVALGRVDCLVFTAGVGENAHFVREDALAGLEMYGIKVDPERNKLPNDGPRLISTDDSTVKVFVIPTNEELAIARYSAKFAE.

A Mg(2+)-binding site is contributed by Asn-8. Position 15 (Lys-15) interacts with ATP. Residue Arg-92 coordinates substrate. Asp-149 acts as the Proton donor/acceptor in catalysis. ATP-binding positions include 209–213 (HLGNG), 283–285 (DFR), and 331–335 (GVGEN). Glu-385 contacts Mg(2+).

This sequence belongs to the acetokinase family. In terms of assembly, homodimer. Mg(2+) is required as a cofactor. It depends on Mn(2+) as a cofactor.

It localises to the cytoplasm. It catalyses the reaction acetate + ATP = acetyl phosphate + ADP. Its pathway is metabolic intermediate biosynthesis; acetyl-CoA biosynthesis; acetyl-CoA from acetate: step 1/2. Catalyzes the formation of acetyl phosphate from acetate and ATP. Can also catalyze the reverse reaction. The chain is Acetate kinase from Corynebacterium efficiens (strain DSM 44549 / YS-314 / AJ 12310 / JCM 11189 / NBRC 100395).